A 561-amino-acid chain; its full sequence is Solute carrier family 41 member 2 (561 aa).

Topologically, residues methionine 1–glutamine 150 are extracellular. The chain crosses the membrane as a helical span at residues isoleucine 151 to isoleucine 171. Over valine 172–glutamate 183 the chain is Cytoplasmic. The chain crosses the membrane as a helical span at residues valine 184–serine 204. The Extracellular segment spans residues arginine 205–glutamine 233. Residues valine 234–proline 254 form a helical membrane-spanning segment. Residues aspartate 255–serine 270 are Cytoplasmic-facing. Residues valine 271–glycine 291 form a helical membrane-spanning segment. Residues serine 292 to asparagine 301 are Extracellular-facing. A helical membrane pass occupies residues valine 302 to isoleucine 322. Topologically, residues serine 323 to tyrosine 333 are cytoplasmic. Residues alanine 334 to isoleucine 354 traverse the membrane as a helical segment. Over alanine 355–valine 364 the chain is Extracellular. Residues leucine 365–isoleucine 385 traverse the membrane as a helical segment. At leucine 386–asparagine 394 the chain is on the cytoplasmic side. Residues leucine 395–isoleucine 415 traverse the membrane as a helical segment. At glutamine 416–alanine 457 the chain is on the extracellular side. The chain crosses the membrane as a helical span at residues glutamine 458–methionine 478. The Cytoplasmic portion of the chain corresponds to lysine 479–proline 487. A helical membrane pass occupies residues isoleucine 488–alanine 508. The Extracellular segment spans residues aspartate 509 to threonine 531. A helical transmembrane segment spans residues alanine 532–isoleucine 552. The Cytoplasmic portion of the chain corresponds to glycine 553–aspartate 561.

It belongs to the SLC41A transporter family.

It is found in the cell membrane. It carries out the reaction Mg(2+)(in) = Mg(2+)(out). The enzyme catalyses Mn(2+)(in) = Mn(2+)(out). It catalyses the reaction Co(2+)(in) = Co(2+)(out). The catalysed reaction is Ni(2+)(in) = Ni(2+)(out). It carries out the reaction Fe(2+)(in) = Fe(2+)(out). Functionally, acts as a plasma-membrane magnesium transporter. Can also mediate the transport of other divalent metal cations in an order of Ba(2+) &gt; Ni(2+) &gt; Co(2+) &gt; Fe(2+) &gt; Mn(2+). The chain is Solute carrier family 41 member 2 (slc41a2) from Xenopus laevis (African clawed frog).